Here is a 416-residue protein sequence, read N- to C-terminus: Glutamyl-tRNA reductase (416 aa).

Substrate-binding positions include 50 to 53 (TCNR), serine 109, 114 to 116 (EPQ), and glutamine 120. Residue cysteine 51 is the Nucleophile of the active site. NADP(+) is bound at residue 189 to 194 (GAGEMI).

This sequence belongs to the glutamyl-tRNA reductase family. As to quaternary structure, homodimer.

It catalyses the reaction (S)-4-amino-5-oxopentanoate + tRNA(Glu) + NADP(+) = L-glutamyl-tRNA(Glu) + NADPH + H(+). It functions in the pathway porphyrin-containing compound metabolism; protoporphyrin-IX biosynthesis; 5-aminolevulinate from L-glutamyl-tRNA(Glu): step 1/2. Catalyzes the NADPH-dependent reduction of glutamyl-tRNA(Glu) to glutamate 1-semialdehyde (GSA). In Ruthia magnifica subsp. Calyptogena magnifica, this protein is Glutamyl-tRNA reductase.